The chain runs to 80 residues: Small ribosomal subunit protein uS17 (80 aa).

This sequence belongs to the universal ribosomal protein uS17 family. Part of the 30S ribosomal subunit.

Its function is as follows. One of the primary rRNA binding proteins, it binds specifically to the 5'-end of 16S ribosomal RNA. The sequence is that of Small ribosomal subunit protein uS17 from Brucella anthropi (strain ATCC 49188 / DSM 6882 / CCUG 24695 / JCM 21032 / LMG 3331 / NBRC 15819 / NCTC 12168 / Alc 37) (Ochrobactrum anthropi).